The primary structure comprises 483 residues: Glutarate-semialdehyde dehydrogenase (483 aa).

NADP(+)-binding positions include 156 to 157, 180 to 183, and 233 to 234; these read WN, KPAS, and GS. Glu255 acts as the Proton acceptor in catalysis. Leu256 contacts NADP(+). Residue Cys289 is the Nucleophile of the active site. Glu386 contacts NADP(+).

Belongs to the aldehyde dehydrogenase family.

The catalysed reaction is 5-oxopentanoate + NADP(+) + H2O = glutarate + NADPH + 2 H(+). Its pathway is amino-acid degradation. Its function is as follows. Catalyzes the conversion of 5-oxopentanoate (glutarate semialdehyde) to glutarate. Involved in L-lysine degradation. In Pseudomonas aeruginosa (strain ATCC 15692 / DSM 22644 / CIP 104116 / JCM 14847 / LMG 12228 / 1C / PRS 101 / PAO1), this protein is Glutarate-semialdehyde dehydrogenase.